Here is a 407-residue protein sequence, read N- to C-terminus: F-box protein SKIP23 (407 aa).

The region spanning 2-50 (VDWSTLPKDLLDLISKSLESSFDLIQFRSVCSSWRSAAEPKSPLPTHHL) is the F-box domain.

Part of a SCF (ASK-cullin-F-box) protein ligase complex. Interacts with SKP1A/ASK1.

The protein localises to the nucleus. The protein operates within protein modification; protein ubiquitination. In terms of biological role, component of SCF(ASK-cullin-F-box) E3 ubiquitin ligase complexes, which may mediate the ubiquitination and subsequent proteasomal degradation of target proteins. The polypeptide is F-box protein SKIP23 (SKIP23) (Arabidopsis thaliana (Mouse-ear cress)).